We begin with the raw amino-acid sequence, 485 residues long: N-succinylglutamate 5-semialdehyde dehydrogenase (485 aa).

Gly220–Gly225 is an NAD(+) binding site. Residues Glu243 and Cys278 contribute to the active site.

The protein belongs to the aldehyde dehydrogenase family. AstD subfamily.

The catalysed reaction is N-succinyl-L-glutamate 5-semialdehyde + NAD(+) + H2O = N-succinyl-L-glutamate + NADH + 2 H(+). The protein operates within amino-acid degradation; L-arginine degradation via AST pathway; L-glutamate and succinate from L-arginine: step 4/5. Functionally, catalyzes the NAD-dependent reduction of succinylglutamate semialdehyde into succinylglutamate. This chain is N-succinylglutamate 5-semialdehyde dehydrogenase, found in Vibrio cholerae serotype O1 (strain M66-2).